The primary structure comprises 175 residues: Alpha-crystallin B chain (175 aa).

At Met1 the chain carries N-acetylmethionine. Phosphoserine is present on residues Ser19, Ser45, and Ser59. The sHSP domain maps to 56–164 (RAPSWIDTGL…PERTIPITRE (109 aa)). Position 83 (His83) interacts with Zn(2+). Lys92 carries the N6-acetyllysine modification. 4 residues coordinate Zn(2+): His104, Glu106, His111, and His119. The disordered stretch occupies residues 145-175 (VNGPRKQASGPERTIPITREEKPAVTAAPKK). Lys166 bears the N6-acetyllysine mark. An O-linked (GlcNAc) threonine glycan is attached at Thr170.

This sequence belongs to the small heat shock protein (HSP20) family. Heteromer composed of three CRYAA and one CRYAB subunits. Aggregates with homologous proteins, including the small heat shock protein HSPB1, to form large heteromeric complexes. Inter-subunit bridging via zinc ions enhances stability, which is crucial as there is no protein turn over in the lens. Interacts with HSPBAP1 and TTN/titin. Interacts with TMEM109; in the cellular response to DNA damage. Interacts with DES; binds rapidly during early stages of DES filament assembly and a reduced binding seen in the later stages. Interacts with TMED10; the interaction mediates the translocation from the cytoplasm into the ERGIC (endoplasmic reticulum-Golgi intermediate compartment) and thereby secretion. Interacts with ATP6V1A and with MTOR, forming a ternary complex. In terms of tissue distribution, lens as well as other tissues.

The protein localises to the cytoplasm. It localises to the nucleus. Its subcellular location is the secreted. The protein resides in the lysosome. In terms of biological role, may contribute to the transparency and refractive index of the lens. Has chaperone-like activity, preventing aggregation of various proteins under a wide range of stress conditions. In lens epithelial cells, stabilizes the ATP6V1A protein, preventing its degradation by the proteasome. This chain is Alpha-crystallin B chain (CRYAB), found in Mesocricetus auratus (Golden hamster).